An 827-amino-acid chain; its full sequence is Protein SEY1 (827 aa).

The segment at 1-26 (MSQSSPSNAETDEDLSTTSSSSSFVP) is disordered. Over 1-719 (MSQSSPSNAE…KRSIVQHVTQ (719 aa)) the chain is Cytoplasmic. Residues 63–291 (GNNYHIISVF…VKKDLFRPNY (229 aa)) form the GB1/RHD3-type G domain. GTP is bound at residue 73 to 80 (GSQSTGKS). Coiled-coil stretches lie at residues 389–409 (KSVY…KFRE) and 472–492 (VSNL…VELK). The chain crosses the membrane as a helical span at residues 720 to 740 (IPYYIYLVIMVLGWNEFMAIV). Residues 741 to 743 (RNP) lie on the Lumenal side of the membrane. A helical transmembrane segment spans residues 744-764 (LFFSLVLVFGAGLYILYSMNL). Residues 765–827 (LKPAMVVVQR…VVETIEMQDL (63 aa)) are Cytoplasmic-facing. The stretch at 803 to 823 (QKISASNREKVEEEKVVETIE) forms a coiled coil.

Belongs to the TRAFAC class dynamin-like GTPase superfamily. GB1/RHD3 GTPase family. RHD3 subfamily.

The protein resides in the endoplasmic reticulum membrane. Its function is as follows. Cooperates with the reticulon proteins and tubule-shaping DP1 family proteins to generate and maintain the structure of the tubular endoplasmic reticulum network. Has GTPase activity, which is required for its function in ER organization. This chain is Protein SEY1, found in Scheffersomyces stipitis (strain ATCC 58785 / CBS 6054 / NBRC 10063 / NRRL Y-11545) (Yeast).